The chain runs to 460 residues: Amino acid transporter AVT6A (460 aa).

The next 11 membrane-spanning stretches (helical) occupy residues 45–65, 66–86, 120–140, 172–192, 199–219, 238–258, 281–301, 336–356, 371–391, 394–414, and 427–447; these read FSGA…MALP, ATMK…MAFL, ILLQ…YMII, AAIL…FKRI, SALS…ISIM, LTSF…FICH, ALML…LLFG, LMLV…GLLF, CLTA…PSIW, FQFT…ASII, and TTLA…AIYS.

It belongs to the amino acid/polyamine transporter 2 family. Amino acid/auxin permease (AAAP) (TC 2.A.18.6) subfamily.

It is found in the membrane. The protein is Amino acid transporter AVT6A of Arabidopsis thaliana (Mouse-ear cress).